We begin with the raw amino-acid sequence, 378 residues long: Cell death-related nuclease 6 (378 aa).

Positions 1–17 are cleaved as a signal peptide; the sequence is MIRQIILIVSLIGISNA. N-linked (GlcNAc...) asparagine glycosylation is found at Asn51, Asn92, and Asn111.

Belongs to the DNase II family.

In terms of biological role, involved in apoptotic DNA degradation. This chain is Cell death-related nuclease 6 (crn-6), found in Caenorhabditis elegans.